The following is a 341-amino-acid chain: ATPase GET3 (341 aa).

34-41 (KGGVGKTT) is an ATP binding site. Asp-63 is a catalytic residue. Glu-245 and Asn-272 together coordinate ATP. The Zn(2+) site is built by Cys-283 and Cys-286.

Belongs to the arsA ATPase family. In terms of assembly, homodimer.

The protein resides in the cytoplasm. It is found in the endoplasmic reticulum. Its function is as follows. ATPase required for the post-translational delivery of tail-anchored (TA) proteins to the endoplasmic reticulum. Recognizes and selectively binds the transmembrane domain of TA proteins in the cytosol. This complex then targets to the endoplasmic reticulum by membrane-bound receptors, where the tail-anchored protein is released for insertion. This process is regulated by ATP binding and hydrolysis. ATP binding drives the homodimer towards the closed dimer state, facilitating recognition of newly synthesized TA membrane proteins. ATP hydrolysis is required for insertion. Subsequently, the homodimer reverts towards the open dimer state, lowering its affinity for the membrane-bound receptor, and returning it to the cytosol to initiate a new round of targeting. The chain is ATPase GET3 from Ajellomyces capsulatus (strain G186AR / H82 / ATCC MYA-2454 / RMSCC 2432) (Darling's disease fungus).